The primary structure comprises 264 residues: Thymidylate synthase (264 aa).

Arg21 is a binding site for dUMP. A (6R)-5,10-methylene-5,6,7,8-tetrahydrofolate-binding site is contributed by His51. A dUMP-binding site is contributed by 126–127 (RR). Cys146 acts as the Nucleophile in catalysis. Residues 166-169 (RSAD), Asn177, and 207-209 (HIY) each bind dUMP. Asp169 is a (6R)-5,10-methylene-5,6,7,8-tetrahydrofolate binding site. Ala263 contacts (6R)-5,10-methylene-5,6,7,8-tetrahydrofolate.

Belongs to the thymidylate synthase family. Bacterial-type ThyA subfamily. Homodimer.

The protein resides in the cytoplasm. The enzyme catalyses dUMP + (6R)-5,10-methylene-5,6,7,8-tetrahydrofolate = 7,8-dihydrofolate + dTMP. It functions in the pathway pyrimidine metabolism; dTTP biosynthesis. Catalyzes the reductive methylation of 2'-deoxyuridine-5'-monophosphate (dUMP) to 2'-deoxythymidine-5'-monophosphate (dTMP) while utilizing 5,10-methylenetetrahydrofolate (mTHF) as the methyl donor and reductant in the reaction, yielding dihydrofolate (DHF) as a by-product. This enzymatic reaction provides an intracellular de novo source of dTMP, an essential precursor for DNA biosynthesis. The polypeptide is Thymidylate synthase (Ruminiclostridium cellulolyticum (strain ATCC 35319 / DSM 5812 / JCM 6584 / H10) (Clostridium cellulolyticum)).